The chain runs to 89 residues: Small ribosomal subunit protein uS14 (89 aa).

This sequence belongs to the universal ribosomal protein uS14 family. As to quaternary structure, part of the 30S ribosomal subunit. Contacts proteins S3 and S10.

Functionally, binds 16S rRNA, required for the assembly of 30S particles and may also be responsible for determining the conformation of the 16S rRNA at the A site. In Deinococcus radiodurans (strain ATCC 13939 / DSM 20539 / JCM 16871 / CCUG 27074 / LMG 4051 / NBRC 15346 / NCIMB 9279 / VKM B-1422 / R1), this protein is Small ribosomal subunit protein uS14.